The chain runs to 505 residues: Histidine--tRNA ligase, mitochondrial (505 aa).

The transit peptide at 1 to 31 (MPHLGPLRRRAWAALLGQLLRPPSTVCTRGC) directs the protein to the mitochondrion. At Ser-66 the chain carries Phosphoserine. Residues 130–132 (DLT), Arg-157, Gln-173, Asp-177, Arg-326, and 330–331 (YY) each bind L-histidine. Residue Lys-443 is modified to N6-acetyllysine.

The protein belongs to the class-II aminoacyl-tRNA synthetase family. As to quaternary structure, homodimer.

The protein resides in the mitochondrion. The enzyme catalyses tRNA(His) + L-histidine + ATP = L-histidyl-tRNA(His) + AMP + diphosphate + H(+). In terms of biological role, mitochondrial aminoacyl-tRNA synthetase that catalyzes the ATP-dependent ligation of histidine to the 3'-end of its cognate tRNA, via the formation of an aminoacyl-adenylate intermediate (His-AMP). The sequence is that of Histidine--tRNA ligase, mitochondrial (Hars2) from Mus musculus (Mouse).